Consider the following 695-residue polypeptide: UvrABC system protein C (695 aa).

A compositionally biased stretch (basic and acidic residues) spans 1–10; that stretch reads MNQDPAETRD. Positions 1–53 are disordered; it reads MNQDPAETRDTAAPPPADTTSPSPVSPELEPRSAPGAQDIDAASASLTVDEDD. The segment covering 18 to 27 has biased composition (low complexity); it reads DTTSPSPVSP. The region spanning 88–166 is the GIY-YIG domain; the sequence is TSPGVYRMLN…IKQLRPRFNV (79 aa). One can recognise a UVR domain in the interval 276–311; sequence RAVKQELAVEMEKASNELEFETAALYRDRLAALSAI.

It belongs to the UvrC family. In terms of assembly, interacts with UvrB in an incision complex.

Its subcellular location is the cytoplasm. Functionally, the UvrABC repair system catalyzes the recognition and processing of DNA lesions. UvrC both incises the 5' and 3' sides of the lesion. The N-terminal half is responsible for the 3' incision and the C-terminal half is responsible for the 5' incision. The protein is UvrABC system protein C of Rhodopseudomonas palustris (strain BisB5).